Reading from the N-terminus, the 180-residue chain is Cytidylate kinase (180 aa).

7-15 (GLPGSGTTT) provides a ligand contact to ATP.

The protein belongs to the cytidylate kinase family. Type 2 subfamily.

It localises to the cytoplasm. The enzyme catalyses CMP + ATP = CDP + ADP. The catalysed reaction is dCMP + ATP = dCDP + ADP. In Methanosarcina barkeri (strain Fusaro / DSM 804), this protein is Cytidylate kinase.